Consider the following 664-residue polypeptide: Macrolide export ATP-binding/permease protein MacB (664 aa).

The 239-residue stretch at Leu8–Pro246 folds into the ABC transporter domain. Residue Gly44–Ser51 participates in ATP binding. A run of 4 helical transmembrane segments spans residues Phe287–Gly307, Ile543–Val563, Phe587–Leu607, and Ser629–Ala649.

Belongs to the ABC transporter superfamily. Macrolide exporter (TC 3.A.1.122) family. In terms of assembly, homodimer. Part of the tripartite efflux system MacAB-TolC, which is composed of an inner membrane transporter, MacB, a periplasmic membrane fusion protein, MacA, and an outer membrane component, TolC. The complex forms a large protein conduit and can translocate molecules across both the inner and outer membranes. Interacts with MacA.

Its subcellular location is the cell inner membrane. In terms of biological role, part of the tripartite efflux system MacAB-TolC. MacB is a non-canonical ABC transporter that contains transmembrane domains (TMD), which form a pore in the inner membrane, and an ATP-binding domain (NBD), which is responsible for energy generation. Confers resistance against macrolides. This Acinetobacter baylyi (strain ATCC 33305 / BD413 / ADP1) protein is Macrolide export ATP-binding/permease protein MacB.